Reading from the N-terminus, the 173-residue chain is Cytidylate kinase (173 aa).

Position 7-15 (Gly-7–Thr-15) interacts with ATP.

Belongs to the cytidylate kinase family. Type 2 subfamily.

It localises to the cytoplasm. The catalysed reaction is CMP + ATP = CDP + ADP. It carries out the reaction dCMP + ATP = dCDP + ADP. This is Cytidylate kinase from Methanosphaera stadtmanae (strain ATCC 43021 / DSM 3091 / JCM 11832 / MCB-3).